Here is a 131-residue protein sequence, read N- to C-terminus: Small ribosomal subunit protein uS8 (131 aa).

It belongs to the universal ribosomal protein uS8 family. Part of the 30S ribosomal subunit. Contacts proteins S5 and S12.

One of the primary rRNA binding proteins, it binds directly to 16S rRNA central domain where it helps coordinate assembly of the platform of the 30S subunit. The polypeptide is Small ribosomal subunit protein uS8 (Campylobacter jejuni (strain RM1221)).